Here is a 330-residue protein sequence, read N- to C-terminus: MISLESQVLERHLSFFDGKSVLFAGGISDNFPQTLASKCSSIQIWSCYFDYARTQSAVNFSVEFQGQADLIVYYWTKNKQEVNFQLIQLLAQASIGQEILIIGENRCGVRSVEKTLAPYGEIAKIDSARRCGLYHFSLQNKPHFELKNFWKTYQHPTIQDLTIYSLPGVFSAAELDTGTELLLSTIDNKIKGKVLDLGCGAGVIGSVIKKSSTNAQITMTDIHAMALESAHKTLSENQLQGEVYASDVFSDIEGKFDLIISNPPFHDGIDTAYRAVTELITQAKWHLNQGGELRIVANAFLPYPELLRQHFGDYEILAQTGKFKVYSVKN.

It belongs to the methyltransferase superfamily. RsmC family. In terms of assembly, monomer.

It localises to the cytoplasm. The enzyme catalyses guanosine(1207) in 16S rRNA + S-adenosyl-L-methionine = N(2)-methylguanosine(1207) in 16S rRNA + S-adenosyl-L-homocysteine + H(+). Specifically methylates the guanine in position 1207 of 16S rRNA in the 30S particle. The sequence is that of Ribosomal RNA small subunit methyltransferase C from Haemophilus influenzae (strain 86-028NP).